The primary structure comprises 730 residues: Dynein axonemal intermediate chain 7 (730 aa).

The span at 1–14 (MAPKSKKAPSKKKM) shows a compositional bias: basic residues. The segment at 1–20 (MAPKSKKAPSKKKMTKAERL) is disordered.

It belongs to the DNAI7 family. Part of the multisubunit axonemal dynein complex formed at least of two heavy chains and a number of intermediate and light chains. Interacts with tubulin. Associates with microtubule. In terms of processing, ubiquitinated. Ubiquitination leads to its degradation through the 26S proteasome. Ubiquitin-proteasome-mediated DNAI7 degradation occurs in mitosis. In terms of tissue distribution, high expressed in lung, kidney, and testis.

Its subcellular location is the cell projection. The protein resides in the cilium. It localises to the cytoplasm. Via its association with the multisubunit axonemal dynein complex, is potentially involved in the regulation of cilia function. May also act as a cell cycle regulator. The protein is Dynein axonemal intermediate chain 7 (Dnai7) of Mus musculus (Mouse).